A 295-amino-acid chain; its full sequence is Protease HtpX (295 aa).

A run of 2 helical transmembrane segments spans residues 4 to 24 (ILLF…TLSL) and 42 to 62 (QLLV…LFIS). Histidine 147 provides a ligand contact to Zn(2+). The active site involves glutamate 148. A Zn(2+)-binding site is contributed by histidine 151. 2 consecutive transmembrane segments (helical) span residues 158–178 (VTLA…ARII) and 199–219 (ITTI…VMWF). Glutamate 224 provides a ligand contact to Zn(2+).

Belongs to the peptidase M48B family. Zn(2+) is required as a cofactor.

The protein resides in the cell inner membrane. This chain is Protease HtpX, found in Pseudomonas syringae pv. syringae (strain B728a).